Consider the following 88-residue polypeptide: Small ribosomal subunit protein uS15 (88 aa).

Belongs to the universal ribosomal protein uS15 family. In terms of assembly, part of the 30S ribosomal subunit. Forms a bridge to the 50S subunit in the 70S ribosome, contacting the 23S rRNA.

In terms of biological role, one of the primary rRNA binding proteins, it binds directly to 16S rRNA where it helps nucleate assembly of the platform of the 30S subunit by binding and bridging several RNA helices of the 16S rRNA. Functionally, forms an intersubunit bridge (bridge B4) with the 23S rRNA of the 50S subunit in the ribosome. This is Small ribosomal subunit protein uS15 from Finegoldia magna (strain ATCC 29328 / DSM 20472 / WAL 2508) (Peptostreptococcus magnus).